A 423-amino-acid polypeptide reads, in one-letter code: Probable sucrose-phosphate synthase (423 aa).

The protein belongs to the glycosyltransferase 1 family.

The enzyme catalyses beta-D-fructose 6-phosphate + UDP-alpha-D-glucose = sucrose 6(F)-phosphate + UDP + H(+). In terms of biological role, plays a role in sucrose synthesis by catalyzing the first step of sucrose biosynthesis from UDP-glucose and fructose-6-phosphate. In Thermosipho melanesiensis (strain DSM 12029 / CIP 104789 / BI429), this protein is Probable sucrose-phosphate synthase.